Here is a 193-residue protein sequence, read N- to C-terminus: dCTP deaminase (193 aa).

DCTP contacts are provided by residues 110 to 115 (RSSLAR), aspartate 128, 136 to 138 (VLE), tyrosine 171, lysine 178, and glutamine 182. Glutamate 138 serves as the catalytic Proton donor/acceptor. Residues 169–193 (RPYNRREDAKYRNQQGAVASRIDKD) are disordered.

This sequence belongs to the dCTP deaminase family. Homotrimer.

It carries out the reaction dCTP + H2O + H(+) = dUTP + NH4(+). The protein operates within pyrimidine metabolism; dUMP biosynthesis; dUMP from dCTP (dUTP route): step 1/2. Its function is as follows. Catalyzes the deamination of dCTP to dUTP. In Sodalis glossinidius (strain morsitans), this protein is dCTP deaminase.